Reading from the N-terminus, the 427-residue chain is MDRISNLSDDLLLKIVSSLPTKDVVVTMLLSKRWKFLWMMVPKLRFDDEFELEPSYYGRFLKYVDKSMVLNRAQVLETVKFNVGPCCSSEDIATWIRIGMVRNMRELEISHCEGYFREHRSIKLPKSLYTYEKLEVLKLASTVVLNVPIDVCFPSLKSLHLVCVEYKTKKSHRRLLSGCPVLEELVLDKSYNSFHVRSFYVEIPTLQSLSILDTSGELYGDFTFVVNAPALKYFNFVDFYGDLCLRDNMPEVVDVNIKVIYRNPKKLLGPLKSVKRLSLCLSPSTTLHNHMEFYQLVHLELCGDALMWWDLLTWMLQSSPKLQVLKIYECKCEEHDYLDDPIEEHWEEPSSVPQCLLFHLNIFEWKYYNAGDEEKKVVAYILKNARQLKTATFSAASYLYPKEERSRELNELVYMARASSSCQLLLD.

In terms of domain architecture, F-box spans 1–53 (MDRISNLSDDLLLKIVSSLPTKDVVVTMLLSKRWKFLWMMVPKLRFDDEFELE). Positions 345–395 (HWEEPSSVPQCLLFHLNIFEWKYYNAGDEEKKVVAYILKNARQLKTATFSA) constitute an FBD domain.

The chain is Putative FBD-associated F-box protein At3g50710 from Arabidopsis thaliana (Mouse-ear cress).